We begin with the raw amino-acid sequence, 185 residues long: Elongation factor P (185 aa).

It belongs to the elongation factor P family.

It is found in the cytoplasm. It functions in the pathway protein biosynthesis; polypeptide chain elongation. Functionally, involved in peptide bond synthesis. Stimulates efficient translation and peptide-bond synthesis on native or reconstituted 70S ribosomes in vitro. Probably functions indirectly by altering the affinity of the ribosome for aminoacyl-tRNA, thus increasing their reactivity as acceptors for peptidyl transferase. The polypeptide is Elongation factor P (Caldicellulosiruptor bescii (strain ATCC BAA-1888 / DSM 6725 / KCTC 15123 / Z-1320) (Anaerocellum thermophilum)).